We begin with the raw amino-acid sequence, 1358 residues long: Indole-3-acetaldehyde oxidase (1358 aa).

The 2Fe-2S ferredoxin-type domain maps to Ser11–Ile98. [2Fe-2S] cluster contacts are provided by Cys50, Cys55, and Cys58. The 179-residue stretch at Ile241–Ser419 folds into the FAD-binding PCMH-type domain. The tract at residues Ser532–His559 is disordered. The span at Asn537 to Asp554 shows a compositional bias: polar residues.

This sequence belongs to the xanthine dehydrogenase family. Aldehyde oxidases (AO) are homodimers and heterodimers of AO subunits. Requires [2Fe-2S] cluster as cofactor. It depends on FAD as a cofactor. The cofactor is Mo-molybdopterin. As to expression, mostly expressed in roots, and, to a lower extent, in mesocotyl, leaves and coleoptile. Accumulates in apical region of maize coleoptiles (at protein level).

The protein resides in the cytoplasm. The catalysed reaction is indole-3-acetaldehyde + O2 + H2O = (indol-3-yl)acetate + H2O2 + H(+). Its activity is regulated as follows. Inhibited by 2-mercaptoethanol, p-chloromercuribenzoate, and iodoacetate. In higher plants aldehyde oxidases (AO) appear to be homo- and heterodimeric assemblies of AO subunits with probably different physiological functions. Involved in the biosynthesis of auxin from (indol-3-yl)acetaldehyde. Can also use indole-3-aldehyde and benzaldehyde as substrate. This is Indole-3-acetaldehyde oxidase (AO1) from Zea mays (Maize).